The chain runs to 742 residues: Phosphoribosylformylglycinamidine synthase subunit PurL (742 aa).

H54 is an active-site residue. Residues Y57 and K96 each contribute to the ATP site. E98 is a Mg(2+) binding site. Substrate is bound by residues 99–102 (SHNH) and R121. H100 acts as the Proton acceptor in catalysis. Position 122 (D122) interacts with Mg(2+). Residue Q245 coordinates substrate. Residue D273 coordinates Mg(2+). Position 317 to 319 (317 to 319 (ESQ)) interacts with substrate. 2 residues coordinate ATP: D500 and G537. N538 lines the Mg(2+) pocket. Substrate is bound at residue S540.

Belongs to the FGAMS family. As to quaternary structure, monomer. Part of the FGAM synthase complex composed of 1 PurL, 1 PurQ and 2 PurS subunits.

It localises to the cytoplasm. It catalyses the reaction N(2)-formyl-N(1)-(5-phospho-beta-D-ribosyl)glycinamide + L-glutamine + ATP + H2O = 2-formamido-N(1)-(5-O-phospho-beta-D-ribosyl)acetamidine + L-glutamate + ADP + phosphate + H(+). Its pathway is purine metabolism; IMP biosynthesis via de novo pathway; 5-amino-1-(5-phospho-D-ribosyl)imidazole from N(2)-formyl-N(1)-(5-phospho-D-ribosyl)glycinamide: step 1/2. In terms of biological role, part of the phosphoribosylformylglycinamidine synthase complex involved in the purines biosynthetic pathway. Catalyzes the ATP-dependent conversion of formylglycinamide ribonucleotide (FGAR) and glutamine to yield formylglycinamidine ribonucleotide (FGAM) and glutamate. The FGAM synthase complex is composed of three subunits. PurQ produces an ammonia molecule by converting glutamine to glutamate. PurL transfers the ammonia molecule to FGAR to form FGAM in an ATP-dependent manner. PurS interacts with PurQ and PurL and is thought to assist in the transfer of the ammonia molecule from PurQ to PurL. The protein is Phosphoribosylformylglycinamidine synthase subunit PurL of Oceanobacillus iheyensis (strain DSM 14371 / CIP 107618 / JCM 11309 / KCTC 3954 / HTE831).